Here is a 173-residue protein sequence, read N- to C-terminus: Translation initiation factor IF-3 (173 aa).

Belongs to the IF-3 family. As to quaternary structure, monomer.

The protein localises to the cytoplasm. Functionally, IF-3 binds to the 30S ribosomal subunit and shifts the equilibrium between 70S ribosomes and their 50S and 30S subunits in favor of the free subunits, thus enhancing the availability of 30S subunits on which protein synthesis initiation begins. This Lactiplantibacillus plantarum (strain ATCC BAA-793 / NCIMB 8826 / WCFS1) (Lactobacillus plantarum) protein is Translation initiation factor IF-3.